We begin with the raw amino-acid sequence, 460 residues long: MNLTSPKVSTMFFDQIITVTDHNVTWEKIQNCLYNLYGEATYNSWLSSLKFVSSRNGEVLLSVSTRFIKEWITVHYMKKILSLWQSEDKSIRSIDIQVIEERNSNFNVILKNREESNHNLGSPLDPRFTFDNFVVGKPNELAFTAAKRVAESIDPILGSNPLFLYGGVGLGKTHLMHAIAWHIVNSPSAKRKVVYLSAEKFMYQYITALRSKDIMLFKEQFRSVDVLMVDDVQFISGKDSTQEEFFHTFNALIDQNKQLVISADRSPSDLDGVEERIKSRLGWGLVADINETTFELRLGILQAKVEQMNMYVPKDVLEFLARNIKSNIRELEGALNKVTHTSLIGRSMTVESASETLIDLLRSNHRSVTIEEIQKKVAEFFNIKVADMQSNRRLRSLARPRQIAMYFAKKFTQKSLPDIGRNFGGRDHATVIHAVKQVENFIKTDSKFADEINRLKKMFK.

Positions 1–91 are domain I, interacts with DnaA modulators; it reads MNLTSPKVST…SLWQSEDKSI (91 aa). The tract at residues 91 to 122 is domain II; the sequence is IRSIDIQVIEERNSNFNVILKNREESNHNLGS. The segment at 123-342 is domain III, AAA+ region; it reads PLDPRFTFDN…GALNKVTHTS (220 aa). Residues Gly169, Gly171, Lys172, and Thr173 each coordinate ATP. The interval 343 to 460 is domain IV, binds dsDNA; it reads LIGRSMTVES…EINRLKKMFK (118 aa).

Belongs to the DnaA family. Oligomerizes as a right-handed, spiral filament on DNA at oriC.

Its subcellular location is the cytoplasm. Functionally, plays an essential role in the initiation and regulation of chromosomal replication. ATP-DnaA binds to the origin of replication (oriC) to initiate formation of the DNA replication initiation complex once per cell cycle. Binds the DnaA box (a 9 base pair repeat at the origin) and separates the double-stranded (ds)DNA. Forms a right-handed helical filament on oriC DNA; dsDNA binds to the exterior of the filament while single-stranded (ss)DNA is stabiized in the filament's interior. The ATP-DnaA-oriC complex binds and stabilizes one strand of the AT-rich DNA unwinding element (DUE), permitting loading of DNA polymerase. After initiation quickly degrades to an ADP-DnaA complex that is not apt for DNA replication. Binds acidic phospholipids. This chain is Chromosomal replication initiator protein DnaA, found in Wolbachia pipientis wMel.